Here is a 267-residue protein sequence, read N- to C-terminus: Inositol-1-monophosphatase (267 aa).

Residues E66, D84, L86, and D87 each coordinate Mg(2+). A substrate-binding site is contributed by E66. Substrate is bound by residues 86-89, R182, and D213; that span reads LDGS. A Mg(2+)-binding site is contributed by D213.

The protein belongs to the inositol monophosphatase superfamily. Mg(2+) serves as cofactor.

It catalyses the reaction a myo-inositol phosphate + H2O = myo-inositol + phosphate. The chain is Inositol-1-monophosphatase (suhB) from Aeropyrum pernix (strain ATCC 700893 / DSM 11879 / JCM 9820 / NBRC 100138 / K1).